The sequence spans 394 residues: Obg-like ATPase 1 (394 aa).

Positions 25 to 282 (LKIGIVGLPN…MPPDEAAKYC (258 aa)) constitute an OBG-type G domain. ATP is bound by residues 34–39 (NVGKST), 56–60 (FCTID), and 94–97 (DIAG). 34 to 39 (NVGKST) is a binding site for GTP. 2 residues coordinate Mg(2+): Ser38 and Thr58. Phe129 and Asn230 together coordinate GTP. ATP-binding positions include 230–231 (NM), Met231, and 263–265 (SCA). Residue 263-265 (SCA) participates in GTP binding. In terms of domain architecture, TGS spans 303–386 (HLIYFFTAGP…QDGDIIFFKF (84 aa)).

The protein belongs to the TRAFAC class OBG-HflX-like GTPase superfamily. OBG GTPase family. YchF/OLA1 subfamily. As to quaternary structure, monomer (Potential). Interacts with GAP1. Mg(2+) is required as a cofactor.

The protein localises to the cell membrane. It is found in the cytoplasm. The protein resides in the cytosol. Its activity is regulated as follows. Activated by GAP1. Functionally, hydrolyzes ATP, and can also hydrolyze GTP with lower efficiency. Has lower affinity for GTP (Potential). Exhibits GTPase activity. Exhibits similar binding affinities and hydrolytic activities toward both GTP and ATP. Binds to the 26 S ribosomal RNA in vitro, but not to the 5.8 S or 18 S rRNA. Confers sensitivity to salinity stress by suppressing the anti-oxidation enzymatic activities and increasing lipid peroxidation thus leading to the accumulation of reactive oxygen species (ROS). The protein is Obg-like ATPase 1 of Oryza sativa subsp. japonica (Rice).